The following is a 267-amino-acid chain: MPADVMEKNSSSPVAATPASVSNTPDKPKTASEHRKSSKPIMEKRRRARINESLGQLKTLILDALKKDSSRHSKLEKADILEMTVKHLRNLQRVQMSAALSTDPSVLGKYRAGFSECMNEVTRFLSTCEGVNTDVRTRLLGHLANCMNQINGMNYPTQPQMPSAAAPHPAYGQPMVQLPGAAPQSSPAPIACKMGGPPVEAAKVYGGFQLVPAPDGQFAFLITNPAFPHNGSVIPVYTNSNVGTALPPSVSPSVMPSVTIDSVWRPW.

The disordered stretch occupies residues 1–43 (MPADVMEKNSSSPVAATPASVSNTPDKPKTASEHRKSSKPIME). Over residues 10-22 (SSSPVAATPASVS) the composition is skewed to low complexity. The span at 26-35 (DKPKTASEHR) shows a compositional bias: basic and acidic residues. The bHLH domain occupies 34 to 91 (HRKSSKPIMEKRRRARINESLGQLKTLILDALKKDSSRHSKLEKADILEMTVKHLRNL). Residues 110–143 (YRAGFSECMNEVTRFLSTCEGVNTDVRTRLLGHL) form the Orange domain. The WRPW motif signature appears at 264–267 (WRPW).

In terms of assembly, transcription repression requires formation of a complex with a corepressor protein of the Groucho/TLE family. Interacts with the bHLH protein hes2, and binds DNA in the form of a heterodimer with the bHLH protein hey1/hrt1. Interacts with the bHLH protein hes6; this interaction may inhibit the transcriptional repressor activity. In terms of tissue distribution, starting from late neurula stage, weakly expressed in midline neural cells, where expression is restricted to the superficial layer of the prospective floorplate. Expressed in the posterior somitic mesoderm (PSM) at tailbud stage. During early tailbud stages, broadly expressed within the pronephric mesoderm both around and inside the developing pronephros. During late tailbud to early tadpole stages, expressed more ventrally in the pronephros, and although initially expressed in both the lateral and medial layers, by these later stages expression is predominantly in the lateral layer. Pronephric expression is no longer detectable in late tadpoles (stage 35).

The protein localises to the nucleus. Its function is as follows. Transcriptional repressor of a subset of early mesodermal genes including myod1 and t/bra. Binds DNA on N-box motifs: 5'-CACNAG-3'. Acts as a negative regulator of myogenesis, mediating Notch signaling to repress expression of myod1. The polypeptide is Transcription factor HES-1-A (hes1-a) (Xenopus laevis (African clawed frog)).